A 901-amino-acid polypeptide reads, in one-letter code: Clathrin coat assembly protein AP180 (901 aa).

The 132-residue stretch at 14–145 folds into the ENTH domain; sequence QYSVTGSAVA…FSYRQMAFDF (132 aa). Disordered stretches follow at residues 285–326, 397–424, 497–522, and 573–606; these read LEGK…DTSP, PISD…STTT, PETS…PSPA, and AAAP…PESS. Residues S296, S300, and S306 each carry the phosphoserine modification. The span at 302–324 shows a compositional bias: polar residues; that stretch reads LSKSSPATTVTSPNSTPAKTIDT. T310 carries O-linked (GlcNAc) threonine glycosylation. S313 carries the phosphoserine modification. T317 bears the Phosphothreonine mark. Low complexity-rich tracts occupy residues 410–424 and 500–511; these read TTTT…STTT and SAPVVTPTASTA. Residues 512–522 show a composition bias toward pro residues; the sequence is PPVPATAPSPA. Phosphoserine is present on residues S594, S600, S621, S627, and S761. Disordered regions lie at residues 803–845 and 857–901; these read SAGV…GMTM and MMRP…KDFL. Residues 835–845 show a composition bias toward low complexity; sequence GMPPSGTGMTM. R859 bears the Asymmetric dimethylarginine; alternate mark. Position 859 is an omega-N-methylarginine; alternate (R859). Positions 870–882 are enriched in polar residues; that stretch reads TQLSPSPTPATQS. A compositionally biased stretch (basic and acidic residues) spans 887–901; the sequence is PAKDPLADLNIKDFL.

It belongs to the PICALM/SNAP91 family. In terms of assembly, binds AP2A2. Interacts with AP2B1; clathrin competes with SNAP91. Post-translationally, thr-310 can be modified by the addition of N-acetylglucosamine which can be further phosphorylated. There is no evidence for direct Thr-310 phosphorylation. As to expression, brain. Associated with the synapses.

Its subcellular location is the cell membrane. The protein resides in the membrane. It is found in the coated pit. In terms of biological role, adaptins are components of the adaptor complexes which link clathrin to receptors in coated vesicles. Clathrin-associated protein complexes are believed to interact with the cytoplasmic tails of membrane proteins, leading to their selection and concentration. Binding of AP180 to clathrin triskelia induces their assembly into 60-70 nm coats. This Mus musculus (Mouse) protein is Clathrin coat assembly protein AP180 (Snap91).